A 290-amino-acid polypeptide reads, in one-letter code: GTPase Era (290 aa).

The 143-residue stretch at 2–144 (KVLKVGVLGP…AIILEEFKPQ (143 aa)) folds into the Era-type G domain. The interval 10–17 (GPTNAGKS) is G1. 10-17 (GPTNAGKS) contacts GTP. The tract at residues 36-40 (NTTLL) is G2. Residues 58-61 (DVPG) are G3. Residue 58 to 62 (DVPGF) participates in GTP binding. The interval 97–100 (NKIE) is G4. Residues 121 to 123 (INK) form a G5 region. Position 122–125 (122–125 (NKFH)) interacts with GTP. Residues 201-279 (CKNEIPHIAR…FIDIFVKTEK (79 aa)) form the KH type-2 domain.

It belongs to the TRAFAC class TrmE-Era-EngA-EngB-Septin-like GTPase superfamily. Era GTPase family. As to quaternary structure, monomer.

The protein resides in the cytoplasm. It is found in the cell membrane. In terms of biological role, an essential GTPase that binds both GDP and GTP, with rapid nucleotide exchange. Plays a role in 16S rRNA processing and 30S ribosomal subunit biogenesis and possibly also in cell cycle regulation and energy metabolism. This is GTPase Era from Mycoplasma genitalium (strain ATCC 33530 / DSM 19775 / NCTC 10195 / G37) (Mycoplasmoides genitalium).